The sequence spans 620 residues: 1-deoxy-D-xylulose-5-phosphate synthase (620 aa).

Residues H80 and 121-123 (GHS) each bind thiamine diphosphate. D152 serves as a coordination point for Mg(2+). Thiamine diphosphate is bound by residues 153 to 154 (GA), N181, Y288, and E370. N181 is a Mg(2+) binding site.

This sequence belongs to the transketolase family. DXPS subfamily. Homodimer. The cofactor is Mg(2+). Requires thiamine diphosphate as cofactor.

The enzyme catalyses D-glyceraldehyde 3-phosphate + pyruvate + H(+) = 1-deoxy-D-xylulose 5-phosphate + CO2. It participates in metabolic intermediate biosynthesis; 1-deoxy-D-xylulose 5-phosphate biosynthesis; 1-deoxy-D-xylulose 5-phosphate from D-glyceraldehyde 3-phosphate and pyruvate: step 1/1. In terms of biological role, catalyzes the acyloin condensation reaction between C atoms 2 and 3 of pyruvate and glyceraldehyde 3-phosphate to yield 1-deoxy-D-xylulose-5-phosphate (DXP). The sequence is that of 1-deoxy-D-xylulose-5-phosphate synthase from Salmonella agona (strain SL483).